The chain runs to 399 residues: Cyclic dehypoxanthine futalosine synthase (399 aa).

A Radical SAM core domain is found at 56–288; the sequence is ATYIIERNIN…IAIARVFLDN (233 aa). 3 residues coordinate [4Fe-4S] cluster: Cys70, Cys74, and Cys77.

It belongs to the radical SAM superfamily. MqnC family. It depends on [4Fe-4S] cluster as a cofactor.

It catalyses the reaction dehypoxanthine futalosine + S-adenosyl-L-methionine = cyclic dehypoxanthinylfutalosinate + 5'-deoxyadenosine + L-methionine + H(+). It participates in quinol/quinone metabolism; menaquinone biosynthesis. Radical SAM enzyme that catalyzes the cyclization of dehypoxanthine futalosine (DHFL) into cyclic dehypoxanthine futalosine (CDHFL), a step in the biosynthesis of menaquinone (MK, vitamin K2). This is Cyclic dehypoxanthine futalosine synthase from Streptomyces coelicolor (strain ATCC BAA-471 / A3(2) / M145).